Reading from the N-terminus, the 207-residue chain is Large ribosomal subunit protein uL4 (207 aa).

Residues 44–71 are disordered; that stretch reads RRQGTQSAKTRAEVRGGGRKPWKQKGTG. Residues 60-71 are compositionally biased toward basic residues; that stretch reads GGRKPWKQKGTG.

The protein belongs to the universal ribosomal protein uL4 family. As to quaternary structure, part of the 50S ribosomal subunit.

One of the primary rRNA binding proteins, this protein initially binds near the 5'-end of the 23S rRNA. It is important during the early stages of 50S assembly. It makes multiple contacts with different domains of the 23S rRNA in the assembled 50S subunit and ribosome. Functionally, forms part of the polypeptide exit tunnel. The chain is Large ribosomal subunit protein uL4 from Alkaliphilus oremlandii (strain OhILAs) (Clostridium oremlandii (strain OhILAs)).